The following is a 270-amino-acid chain: MPGKHQHFQEPEVGCCGKYFLFGFNIVFWVLGALFLAIGLWAWSEKGVLSNISALTDLGGLDPVWLFVVVGGVMSVLGFAGCIGALRENTFLLKFFSVFLGLIFFLELATGILAFVFKDWIRDQLNLFINNNVKAYRDDIDLQNLIDFAQEYWSCCGARGPNDWNLNIYFNCTDLNPSRERCGVPFSCCVRDPAEDVLNTQCGYDVRLKLELEQQGFIHTKGCVGQFEKWLQDNLIVVAGVFVGIALLQIFGICLAQNLVSDIKAVKANW.

The Cytoplasmic portion of the chain corresponds to 1–19; the sequence is MPGKHQHFQEPEVGCCGKY. The chain crosses the membrane as a helical span at residues 20–40; that stretch reads FLFGFNIVFWVLGALFLAIGL. Residues 41–63 lie on the Extracellular side of the membrane; that stretch reads WAWSEKGVLSNISALTDLGGLDP. Residue N51 is glycosylated (N-linked (GlcNAc...) asparagine). The helical transmembrane segment at 64 to 84 threads the bilayer; sequence VWLFVVVGGVMSVLGFAGCIG. The Cytoplasmic segment spans residues 85 to 94; it reads ALRENTFLLK. A helical membrane pass occupies residues 95-115; it reads FFSVFLGLIFFLELATGILAF. Over 116-234 the chain is Extracellular; the sequence is VFKDWIRDQL…GQFEKWLQDN (119 aa). 4 disulfides stabilise this stretch: C155–C223, C156–C188, C172–C182, and C189–C202. N171 is a glycosylation site (N-linked (GlcNAc...) asparagine). A helical transmembrane segment spans residues 235-255; it reads LIVVAGVFVGIALLQIFGICL. At 256–270 the chain is on the cytoplasmic side; the sequence is AQNLVSDIKAVKANW.

Belongs to the tetraspanin (TM4SF) family. Interacts with ADAM10; the interaction influences ADAM10 substrate specificity, endocytosis and turnover.

The protein resides in the cell membrane. Its function is as follows. Part of TspanC8 subgroup, composed of 6 members that interact with the transmembrane metalloprotease ADAM10. This interaction is required for ADAM10 exit from the endoplasmic reticulum and for enzymatic maturation and trafficking to the cell surface as well as substrate specificity. Different TspanC8/ADAM10 complexes have distinct substrates. Seems to regulate VE-cadherin expression in endothelial cells probably through interaction with ADAM10, promoting leukocyte transmigration. The protein is Tetraspanin-17 (TSPAN17) of Bos taurus (Bovine).